Reading from the N-terminus, the 82-residue chain is Delta-ctenitoxin-Pn2a (82 aa).

The signal sequence occupies residues 1–17; sequence MKVAILFLSILVLAVAS. A propeptide spanning residues 18-34 is cleaved from the precursor; it reads ESIEESRDDFAVEELGR. 5 disulfides stabilise this stretch: cysteine 37–cysteine 51, cysteine 44–cysteine 57, cysteine 48–cysteine 80, cysteine 50–cysteine 65, and cysteine 59–cysteine 63.

The protein belongs to the neurotoxin 03 (Tx2) family. 06 subfamily. As to expression, expressed by the venom gland.

The protein localises to the secreted. Its function is as follows. Toxin that is known to potentiate erectile function. It binds voltage-dependently to sodium channels (Nav), inhibits the inactivation of the activated channels and decreases the peak inward current. The toxin delays inactivation of Nav1.2/SCN2A, Nav1.3/SCN3A, Nav1.4/SCN4A and Nav1.8/SCN10A, slows the inactivation process and decreases the sodium peak amplitude of Nav1.5/SCN5A and Nav1.6/SCN8A. In vivo, it enhances erectile function by inducing the release of nictric oxide (NO): it slows the sodium current, leading to depolarization, which leads to an increase in calcium influx (probably via activation of N-type calcium channels) which in turn activates neuronal NO synthase (nNOS/NOS1), inducing nitric oxide (NO) production. In a final step, NO activates soluble guanylate cyclase (GUCY1A1/GUCY1B1) which in turn increases cGMP formation, resulting in penile erection. It is noteworthy that the toxin does not provoke erection by inhibiting phosphodiesterase type 5 (PDE5A), an enzyme that hydrolysis cGMP. In vivo, it also causes scratching, lacrimation, hypersalivation, sweating and agitation followed by spastic paralysis of the anterior and posterior extremities and death at dose levels of 0.79 mg/mouse. It is insecticidal to the larval and adult forms of the house fly. The toxin also improves cavernosal relaxation in different models where erectile dysfunction is observed, such as deoxycorticosterone-acetate (DOCA)-salt hypertensive rats, mice models for type-1 diabetes, as well as elderly rats. The chain is Delta-ctenitoxin-Pn2a from Phoneutria nigriventer (Brazilian armed spider).